A 438-amino-acid chain; its full sequence is Enolase 1 (438 aa).

Substrate is bound by residues His160 and Glu169. Residue Glu212 is the Proton donor of the active site. Residues Asp247, Glu296, and Asp321 each contribute to the Mg(2+) site. Substrate-binding residues include Glu296 and Asp321. The active-site Proton acceptor is Lys346. Substrate is bound by residues 373–376 (SHRS) and Lys397.

The protein belongs to the enolase family. As to quaternary structure, homodimer. Requires Mg(2+) as cofactor.

It localises to the cytoplasm. It carries out the reaction (2R)-2-phosphoglycerate = phosphoenolpyruvate + H2O. The protein operates within carbohydrate degradation; glycolysis; pyruvate from D-glyceraldehyde 3-phosphate: step 4/5. The protein is Enolase 1 (ENO1) of Candida glabrata (strain ATCC 2001 / BCRC 20586 / JCM 3761 / NBRC 0622 / NRRL Y-65 / CBS 138) (Yeast).